The sequence spans 208 residues: Large ribosomal subunit protein bL25 (208 aa).

This sequence belongs to the bacterial ribosomal protein bL25 family. CTC subfamily. As to quaternary structure, part of the 50S ribosomal subunit; part of the 5S rRNA/L5/L18/L25 subcomplex. Contacts the 5S rRNA. Binds to the 5S rRNA independently of L5 and L18.

Its function is as follows. This is one of the proteins that binds to the 5S RNA in the ribosome where it forms part of the central protuberance. The polypeptide is Large ribosomal subunit protein bL25 (Acidovorax ebreus (strain TPSY) (Diaphorobacter sp. (strain TPSY))).